The chain runs to 1033 residues: Potassium-transporting ATPase alpha chain 1 (1033 aa).

Topologically, residues 1–96 are cytoplasmic; the sequence is MGKENYELYS…NALRPPRGTP (96 aa). Y6 and Y9 each carry phosphotyrosine. Residues 14 to 39 form a disordered region; the sequence is GTGPGGDMAAKMSKKKAGGGGGKKKE. Residues 25 to 38 show a composition bias toward basic residues; the sequence is MSKKKAGGGGGKKK. S26 carries the post-translational modification Phosphoserine. A helical membrane pass occupies residues 97–117; the sequence is EYVKFARQLAGGLQCLMWVAA. Residues 118-140 are Lumenal-facing; that stretch reads AICLIAFAIQASEGDLTTDDNLY. Residues 141-161 form a helical membrane-spanning segment; sequence LALALIAVVVVTGCFGYYQEF. At 162-297 the chain is on the cytoplasmic side; it reads KSTNIIASFK…NEKTPIAIEI (136 aa). A helical membrane pass occupies residues 298 to 317; it reads EHFVDIIAGLAILFGATFFV. Over 318 to 329 the chain is Lumenal; sequence VAMCIGYTFLRA. Residues 330–347 traverse the membrane as a helical segment; it reads MVFFMAIVVAYVPEGLLA. 4 residues coordinate K(+): V338, A339, V341, and E343. Over 348-781 the chain is Cytoplasmic; the sequence is TVTVCLSLTA…EQGRLIFDNL (434 aa). The active-site 4-aspartylphosphate intermediate is D385. Mg(2+)-binding residues include D385 and T387. Phosphoserine occurs at positions 461 and 599. Residues D726 and D730 each coordinate Mg(2+). Residues 782-801 traverse the membrane as a helical segment; the sequence is KKSIAYTLTKNIPELTPYLI. E795 serves as a coordination point for K(+). The Lumenal segment spans residues 802-811; it reads YITVSVPLPL. Residues 812–832 traverse the membrane as a helical segment; that stretch reads GCITILFIELCTDIFPSVSLA. Residue E820 coordinates K(+). Residues 833 to 852 lie on the Cytoplasmic side of the membrane; it reads YEKAESDIMHLRPRNPRRDR. S838 carries the phosphoserine modification. The chain crosses the membrane as a helical span at residues 853 to 875; the sequence is LVNEPLAAYSYFQIGAIQSFAGF. Residues 876–927 lie on the Lumenal side of the membrane; sequence ADYFTAMAQEGWFPLLCVGLRPQWEDHHLQDLQDSYGQEWTFGQRLYQQYTC. A helical membrane pass occupies residues 928–947; that stretch reads YTVFFISIEMCQIADVLIRK. The Cytoplasmic segment spans residues 948-961; it reads TRRLSAFQQGFFRN. Residue S952 is modified to Phosphoserine; by PKA. A helical transmembrane segment spans residues 962 to 980; sequence RILVIAIVFQVCIGCFLCY. The Lumenal portion of the chain corresponds to 981 to 995; the sequence is CPGMPNIFNFMPIRF. The helical transmembrane segment at 996–1016 threads the bilayer; it reads QWWLVPMPFGLLIFVYDEIRK. Residues 1017-1033 lie on the Cytoplasmic side of the membrane; the sequence is LGVRCCPGSWWDQELYY.

This sequence belongs to the cation transport ATPase (P-type) (TC 3.A.3) family. Type IIC subfamily. The gastric H(+)/K(+) ATPase pump is composed of the catalytic alpha subunit ATP4A and the regulatory beta subunit ATP4B. Interacts (via the P-domain) with ATP4B (via N-terminus); this interaction stabilizes the lumenal-open E2 conformation state and prevents the reverse reaction of the transport cycle.

The protein localises to the apical cell membrane. The enzyme catalyses K(+)(out) + ATP + H2O + H(+)(in) = K(+)(in) + ADP + phosphate + 2 H(+)(out). The catalytic subunit of the gastric H(+)/K(+) ATPase pump which transports H(+) ions in exchange for K(+) ions across the apical membrane of parietal cells. Uses ATP as an energy source to pump H(+) ions to the gastric lumen while transporting K(+) ion from the lumen into the cell. Remarkably generates a million-fold proton gradient across the gastric parietal cell membrane, acidifying the gastric juice down to pH 1. Within a transport cycle, the transfer of a H(+) ion across the membrane is coupled to ATP hydrolysis and is associated with a transient phosphorylation that shifts the pump conformation from inward-facing (E1) to outward-facing state (E2). The release of the H(+) ion in the stomach lumen is followed by binding of K(+) ion converting the pump conformation back to the E1 state. The protein is Potassium-transporting ATPase alpha chain 1 (Atp4a) of Rattus norvegicus (Rat).